The primary structure comprises 177 residues: uncharacterized protein (177 aa).

Transmembrane regions (helical) follow at residues 4-24, 33-53, 80-100, and 115-135; these read IIIL…GFIL, ILSI…LHWI, IAFI…GSFL, and MLGA…LLYV.

It is found in the cell membrane. This is an uncharacterized protein from Bacillus subtilis (strain 168).